The sequence spans 198 residues: Probable chorismate pyruvate-lyase (198 aa).

Substrate-binding residues include Arg73, Leu111, and Glu172.

The protein belongs to the UbiC family.

The protein resides in the cytoplasm. It carries out the reaction chorismate = 4-hydroxybenzoate + pyruvate. The protein operates within cofactor biosynthesis; ubiquinone biosynthesis. Its function is as follows. Removes the pyruvyl group from chorismate, with concomitant aromatization of the ring, to provide 4-hydroxybenzoate (4HB) for the ubiquinone pathway. This chain is Probable chorismate pyruvate-lyase, found in Burkholderia orbicola (strain AU 1054).